The sequence spans 354 residues: Caffeic acid 3-O-methyltransferase (354 aa).

121–127 is a binding site for substrate; sequence MNQDKVL. The tract at residues 153–171 is substrate binding; that stretch reads AFEYHGKDQRFNKVFNSGM. Residues Gly-199, Asp-222, Asp-242, Met-243, and Lys-256 each contribute to the S-adenosyl-L-methionine site. His-260 functions as the Proton acceptor in the catalytic mechanism.

Belongs to the class I-like SAM-binding methyltransferase superfamily. Cation-independent O-methyltransferase family. COMT subfamily. Homodimer.

It carries out the reaction (E)-caffeate + S-adenosyl-L-methionine = (E)-ferulate + S-adenosyl-L-homocysteine + H(+). It participates in aromatic compound metabolism; phenylpropanoid biosynthesis. Catalyzes the conversion of caffeic acid to ferulic acid and of 5-hydroxyferulic acid to sinapic acid. The resulting products may subsequently be converted to the corresponding alcohols that are incorporated into lignins. In Zinnia elegans (Garden zinnia), this protein is Caffeic acid 3-O-methyltransferase.